Reading from the N-terminus, the 243-residue chain is Pyridoxine 5'-phosphate synthase (243 aa).

Asn-9 serves as a coordination point for 3-amino-2-oxopropyl phosphate. 11–12 provides a ligand contact to 1-deoxy-D-xylulose 5-phosphate; sequence DH. Position 20 (Arg-20) interacts with 3-amino-2-oxopropyl phosphate. Residue His-45 is the Proton acceptor of the active site. Arg-47 and His-52 together coordinate 1-deoxy-D-xylulose 5-phosphate. Glu-72 serves as the catalytic Proton acceptor. A 1-deoxy-D-xylulose 5-phosphate-binding site is contributed by Thr-102. His-193 (proton donor) is an active-site residue. 3-amino-2-oxopropyl phosphate-binding positions include Gly-194 and 215–216; that span reads GH.

This sequence belongs to the PNP synthase family. As to quaternary structure, homooctamer; tetramer of dimers.

The protein resides in the cytoplasm. It carries out the reaction 3-amino-2-oxopropyl phosphate + 1-deoxy-D-xylulose 5-phosphate = pyridoxine 5'-phosphate + phosphate + 2 H2O + H(+). Its pathway is cofactor biosynthesis; pyridoxine 5'-phosphate biosynthesis; pyridoxine 5'-phosphate from D-erythrose 4-phosphate: step 5/5. In terms of biological role, catalyzes the complicated ring closure reaction between the two acyclic compounds 1-deoxy-D-xylulose-5-phosphate (DXP) and 3-amino-2-oxopropyl phosphate (1-amino-acetone-3-phosphate or AAP) to form pyridoxine 5'-phosphate (PNP) and inorganic phosphate. This Vibrio cholerae serotype O1 (strain ATCC 39315 / El Tor Inaba N16961) protein is Pyridoxine 5'-phosphate synthase.